Reading from the N-terminus, the 400-residue chain is Telomeric repeat-binding factor 2-interacting protein 1 (400 aa).

A2 is modified (N-acetylalanine). Residues S36 and S43 each carry the phosphoserine modification. A BRCT domain is found at 78–101; that stretch reads FISTQYILDCVERNERLELEAYRL. Residues 105 to 126 are disordered; sequence SAADTGSEAKPGALAEGAAEPE. Over residues 112–125 the composition is skewed to low complexity; the sequence is EAKPGALAEGAAEP. K114 is covalently cross-linked (Glycyl lysine isopeptide (Lys-Gly) (interchain with G-Cter in SUMO2)). The region spanning 128–188 is the Myb-like domain; the sequence is QRLAGRIAFT…SLKDRYLKHL (61 aa). Phosphoserine is present on residues S154 and S156. K194 participates in a covalent cross-link: Glycyl lysine isopeptide (Lys-Gly) (interchain with G-Cter in SUMO2). 2 disordered regions span residues 196–244 and 264–311; these read LLGD…EEIQ and VVVD…SQPE. Phosphoserine occurs at positions 203 and 206. Glycyl lysine isopeptide (Lys-Gly) (interchain with G-Cter in SUMO2) cross-links involve residues K208, K212, and K240. Over residues 280-305 the composition is skewed to acidic residues; that stretch reads CDDDPPTPEEDSETQPDEEEEEEEEE. A Glycyl lysine isopeptide (Lys-Gly) (interchain with G-Cter in SUMO2) cross-link involves residue K373. Residues 384-400 carry the Nuclear localization signal motif; that stretch reads KKFGAQNVARRIEFRKK.

It belongs to the RAP1 family. As to quaternary structure, associates with the I-kappa-B-kinase (IKK) core complex, composed of CHUK, IKBKB and IKBKG. Homodimer. Component of the shelterin complex (telosome) composed of TERF1, TERF2, TINF2, TERF2IP ACD and POT1. Interacts with TERF2 (but not TERF1) with its C-terminus. Interacts with SLX4/BTBD12. Interacts with TERF2; the interaction is direct.

The protein resides in the nucleus. It localises to the cytoplasm. The protein localises to the chromosome. Its subcellular location is the telomere. Acts both as a regulator of telomere function and as a transcription regulator. Involved in the regulation of telomere length and protection as a component of the shelterin complex (telosome). In contrast to other components of the shelterin complex, it is dispensible for telomere capping and does not participate in the protection of telomeres against non-homologous end-joining (NHEJ)-mediated repair. Instead, it is required to negatively regulate telomere recombination and is essential for repressing homology-directed repair (HDR), which can affect telomere length. Does not bind DNA directly: recruited to telomeric double-stranded 5'-TTAGGG-3' repeats via its interaction with TERF2. Independently of its function in telomeres, also acts as a transcription regulator: recruited to extratelomeric 5'-TTAGGG-3' sites via its association with TERF2 or other factors, and regulates gene expression. When cytoplasmic, associates with the I-kappa-B-kinase (IKK) complex and acts as a regulator of the NF-kappa-B signaling by promoting IKK-mediated phosphorylation of RELA/p65, leading to activate expression of NF-kappa-B target genes. This is Telomeric repeat-binding factor 2-interacting protein 1 (TERF2IP) from Macaca fascicularis (Crab-eating macaque).